The sequence spans 217 residues: Ras-related protein RABA1g (217 aa).

Residue 20–27 participates in GTP binding; sequence GDSGVGKS. The short motif at 42–50 is the Effector region element; sequence SKSTIGVEF. Residues 68-72, 126-129, and 156-157 contribute to the GTP site; these read DTAGQ, NKAD, and SA. 2 S-geranylgeranyl cysteine lipidation sites follow: C214 and C215.

It belongs to the small GTPase superfamily. Rab family.

It localises to the cell membrane. In terms of biological role, intracellular vesicle trafficking and protein transport. This Arabidopsis thaliana (Mouse-ear cress) protein is Ras-related protein RABA1g (RABA1G).